Here is a 687-residue protein sequence, read N- to C-terminus: Triadin (687 aa).

Residues 1-47 (MTEITAEGNASITTTVIDNKNGSVPKSPGKVLKRTVTEDIVTTFSSP) lie on the Cytoplasmic side of the membrane. A helical membrane pass occupies residues 48 to 68 (AAWLLVIALIITWSAVAIVMF). Residues 69–687 (DLVDYKNFSA…NSPGQKQQEQ (619 aa)) lie on the Lumenal side of the membrane. The segment covering 117 to 130 (DGDEDDEDADEDID) has biased composition (acidic residues). Disordered stretches follow at residues 117–265 (DGDE…EQKD), 280–643 (GDLK…QKSP), and 660–687 (FQFP…QQEQ). Residues 131 to 265 (KGEIEEPPLK…PAVPKHEQKD (135 aa)) show a composition bias toward basic and acidic residues. A compositionally biased stretch (polar residues) spans 295–306 (LTASRPALSTPS). Phosphoserine occurs at positions 303 and 306. Residues 307–356 (LEEKEKEEKKKVEKKVTSDTKKKEKGEAKKKSEKETVIDGKGKEPGKPPE) are compositionally biased toward basic and acidic residues. The span at 357–370 (TKQTTTKLTTQAAA) shows a compositional bias: low complexity. 4 stretches are compositionally biased toward basic and acidic residues: residues 371-390 (TKDE…EEKP), 396-431 (EKKE…KEEI), 442-459 (GKKE…DVKP), and 466-501 (LKKE…KEAK). The N-linked (GlcNAc...) asparagine glycan is linked to asparagine 514. Basic and acidic residues-rich tracts occupy residues 539 to 583 (TAEK…KVPP) and 594 to 630 (TRAE…DKEV). 2 stretches are compositionally biased toward polar residues: residues 631–643 (TNNV…QKSP) and 667–687 (VQHS…QQEQ).

As to quaternary structure, homooligomer of variable subunit number; disulfide-linked. Interacts with CASQ1 in skeletal muscle. Interacts with CASQ2. Interacts with RYR1 in skeletal muscle. Post-translationally, phosphorylated by CaMK2. In terms of processing, N-glycosylated. As to expression, detected in skeletal muscle (at protein level). Detected in skeletal muscle.

The protein resides in the sarcoplasmic reticulum membrane. The protein localises to the microsome. It is found in the cell membrane. It localises to the sarcolemma. Contributes to the regulation of lumenal Ca2+ release via the sarcoplasmic reticulum calcium release channels RYR1 and RYR2, a key step in triggering skeletal and heart muscle contraction. Required for normal organization of the triad junction, where T-tubules and the sarcoplasmic reticulum terminal cisternae are in close contact. Required for normal skeletal muscle strength. Plays a role in excitation-contraction coupling in the heart and in regulating the rate of heart beats. The polypeptide is Triadin (Rattus norvegicus (Rat)).